A 41-amino-acid polypeptide reads, in one-letter code: Large ribosomal subunit protein bL36 (41 aa).

The protein belongs to the bacterial ribosomal protein bL36 family.

This chain is Large ribosomal subunit protein bL36, found in Rickettsia massiliae (strain Mtu5).